The primary structure comprises 262 residues: Glutamate 5-kinase (262 aa).

ATP is bound at residue K14. S54, D141, and N153 together coordinate substrate. Residues 173–174 (SD) and 214–220 (TGGMVTK) each bind ATP.

Belongs to the glutamate 5-kinase family.

It is found in the cytoplasm. It carries out the reaction L-glutamate + ATP = L-glutamyl 5-phosphate + ADP. It functions in the pathway amino-acid biosynthesis; L-proline biosynthesis; L-glutamate 5-semialdehyde from L-glutamate: step 1/2. In terms of biological role, catalyzes the transfer of a phosphate group to glutamate to form L-glutamate 5-phosphate. In Symbiobacterium thermophilum (strain DSM 24528 / JCM 14929 / IAM 14863 / T), this protein is Glutamate 5-kinase.